Here is a 399-residue protein sequence, read N- to C-terminus: F420-dependent formate dehydrogenase subunit beta (399 aa).

2 4Fe-4S ferredoxin-type domains span residues 287–307 (TEYMDDFSRCLKCYGCREACP) and 339–367 (ERMLHMVESCTNCGQCEEVCPGEIPLAKI). Positions 296, 299, 302, 306, 348, 351, 354, and 358 each coordinate [4Fe-4S] cluster.

The protein belongs to the FrhB family. As to quaternary structure, dimer of an alpha (FdhA) and a beta (FdhB) subunit. Requires [4Fe-4S] cluster as cofactor. FAD serves as cofactor. It depends on Zn(2+) as a cofactor.

The enzyme catalyses oxidized coenzyme F420-(gamma-L-Glu)(n) + formate + 2 H(+) = reduced coenzyme F420-(gamma-L-Glu)(n) + CO2. With respect to regulation, is extremely sensitive to oxygen. Contains a FAD that is required for coenzyme F420-dependent activity but not for methyl viologen-dependent activity. Preincubation of the FAD-depleted enzyme with FAD restores coenzyme F420-dependent activity. Neither FMN nor FADH2 can replace FAD. Strongly inhibited by cyanide, azide, alpha,alpha-dipyridyl and 1,10-phenanthroline. Functionally, catalyzes the oxidation of formate to carbon dioxide, with coenzyme F420 as the electron acceptor. In vitro can also use methyl viologen, 7,8-didemethyl-8-hydroxy-5-deazariboflavin (or FO, a hydrolytic derivative of coenzyme F420), FMN and FAD as electron acceptors, but not NAD(+) or NADP(+). In Methanobacterium formicicum, this protein is F420-dependent formate dehydrogenase subunit beta.